Consider the following 940-residue polypeptide: Alanine--tRNA ligase (940 aa).

Zn(2+) is bound by residues histidine 581, histidine 585, cysteine 683, and histidine 687.

It belongs to the class-II aminoacyl-tRNA synthetase family. Requires Zn(2+) as cofactor.

The protein localises to the cytoplasm. It carries out the reaction tRNA(Ala) + L-alanine + ATP = L-alanyl-tRNA(Ala) + AMP + diphosphate. Its function is as follows. Catalyzes the attachment of alanine to tRNA(Ala) in a two-step reaction: alanine is first activated by ATP to form Ala-AMP and then transferred to the acceptor end of tRNA(Ala). Also edits incorrectly charged Ser-tRNA(Ala) and Gly-tRNA(Ala) via its editing domain. In Leptospira borgpetersenii serovar Hardjo-bovis (strain JB197), this protein is Alanine--tRNA ligase.